Reading from the N-terminus, the 232-residue chain is N-(5'-phosphoribosyl)anthranilate isomerase (232 aa).

This sequence belongs to the TrpF family.

It carries out the reaction N-(5-phospho-beta-D-ribosyl)anthranilate = 1-(2-carboxyphenylamino)-1-deoxy-D-ribulose 5-phosphate. The protein operates within amino-acid biosynthesis; L-tryptophan biosynthesis; L-tryptophan from chorismate: step 3/5. This is N-(5'-phosphoribosyl)anthranilate isomerase (TRP1) from Wickerhamomyces anomalus (Yeast).